The sequence spans 377 residues: Palmitoyltransferase ZDHHC16 (377 aa).

The Cytoplasmic segment spans residues 1–77; the sequence is MRGQRSLLLG…VYWLVDNVIR (77 aa). A helical transmembrane segment spans residues 78–98; sequence WFGVVFVVLVIVLTGSIVAIA. Over 99–116 the chain is Lumenal; that stretch reads YLCVLPLILRTYSVPRLC. Residues 117–137 form a helical membrane-spanning segment; it reads WHFFYSHWNLILIVFHYYQAI. At 138 to 198 the chain is on the cytoplasmic side; that stretch reads TTPPGYPPQG…NNCVGHYNHR (61 aa). The DHHC domain occupies 155-205; sequence SICKKCIYPKPARTHHCSICNRCVLKMDHHCPWLNNCVGHYNHRYFFSFCF. Cys-185 (S-palmitoyl cysteine intermediate) is an active-site residue. The helical transmembrane segment at 199 to 219 threads the bilayer; sequence YFFSFCFFMTLGCVYCSYGSW. Residues 220–266 lie on the Lumenal side of the membrane; it reads DLFREAYAAIEKMKQLDKNKLQAVANQTYHQTPPPTFSFRERMTHKS. Residues 267-287 form a helical membrane-spanning segment; it reads LVYLWFLCSSVALALGALTVW. The Cytoplasmic portion of the chain corresponds to 288–377; sequence HAVLISRGET…TAHSASVMAV (90 aa).

It belongs to the DHHC palmitoyltransferase family. As to quaternary structure, interacts with ABL1. Interacts with COPS5/JAB1. As to expression, widely expressed.

The protein resides in the endoplasmic reticulum membrane. The enzyme catalyses L-cysteinyl-[protein] + hexadecanoyl-CoA = S-hexadecanoyl-L-cysteinyl-[protein] + CoA. Its function is as follows. Palmitoyl acyltransferase that mediates palmitoylation of proteins such as PLN and ZDHHC6. Required during embryonic heart development and cardiac function, possibly by mediating palmitoylation of PLN, thereby affecting PLN phosphorylation and homooligomerization. Also required for eye development. Palmitoylates ZDHHC6, affecting the quaternary assembly of ZDHHC6, its localization, stability and function. May play a role in DNA damage response. May be involved in apoptosis regulation. Involved in the proliferation of neural stem cells by regulating the FGF/ERK pathway. This Homo sapiens (Human) protein is Palmitoyltransferase ZDHHC16.